The sequence spans 68 residues: Tau-scoloptoxin(04)-Ssm1b (68 aa).

Positions 1-25 are cleaved as a signal peptide; it reads MLKSFCILSVFMVLFLAKFPDLCSG. A propeptide spanning residues 26–36 is cleaved from the precursor; it reads EEISPLKIVVR. 2 disulfide bridges follow: cysteine 45/cysteine 56 and cysteine 50/cysteine 63. The segment at 55-67 is highly charged C-terminal region, binds to TRPV1 channel; sequence RCSIVDKQCIKKE.

This sequence belongs to the scoloptoxin-04 family. As to expression, expressed by the venom gland.

It localises to the secreted. In terms of biological role, extremely potent agonist and potentiator of TRPV1 (EC(50)=470-521.5 nM (mouse)). It strongly promotes the heat activation process by downshifting the activation threshold temperature. It preferably binds to the activated channel and promotes its opening. Holding the channel closed by cooling prevents binding of this toxin, leaving it ineffective. The toxin binds to the charge-rich outer pore region of the channel where it directly interacts with the pore helix and turret, two adjacent structural elements known to be critical for activation gating of TRPV1. In comparison with Sm1b, induces a TRPV1 desensitization with slower kinetics (20 seconds). In vivo, induces pain in mice after intraplantar injection. Potent agonist and probable potentiator of TRPV1 (EC(50)=38.35 uM (mouse)). Also binds to the outer pore region of TRPV1. In comparison with Sm1a, induces a TRPV1 desensitization with faster kinetics (2 seconds) and leads to a more complete TRPV1 desensitization. Desensitization is achieved by reducing both the open probability and the single-channel conductance upon prolonged exposure. In Scolopendra mutilans (Chinese red-headed centipede), this protein is Tau-scoloptoxin(04)-Ssm1b.